Reading from the N-terminus, the 130-residue chain is Glycine cleavage system H protein (130 aa).

Residues 28-110 enclose the Lipoyl-binding domain; the sequence is TVRIGITSVA…FGEGWLFEVE (83 aa). The residue at position 69 (Lys-69) is an N6-lipoyllysine.

It belongs to the GcvH family. As to quaternary structure, the glycine cleavage system is composed of four proteins: P, T, L and H. It depends on (R)-lipoate as a cofactor.

In terms of biological role, the glycine cleavage system catalyzes the degradation of glycine. The H protein shuttles the methylamine group of glycine from the P protein to the T protein. The chain is Glycine cleavage system H protein from Corynebacterium aurimucosum (strain ATCC 700975 / DSM 44827 / CIP 107346 / CN-1) (Corynebacterium nigricans).